Here is a 152-residue protein sequence, read N- to C-terminus: MADSERLSAPGCWLACTSFSRTKKGILLFAEIILCLVILICFSASTTSAYSSLSVIEMICAAVLLVFYTCDLHSKISFINWPWTDFFRSLIATILYLITSIVVLVEGRGSSRVVAGILGLLATLLFGYDAYITFPLKQQRHTAAPTDPTDGP.

The 120-residue stretch at 19 to 138 folds into the MARVEL domain; sequence FSRTKKGILL…DAYITFPLKQ (120 aa). The next 4 membrane-spanning stretches (helical) occupy residues 25 to 45, 48 to 68, 85 to 105, and 112 to 132; these read GILL…FSAS, SAYS…LVFY, DFFR…VVLV, and RVVA…DAYI.

It localises to the membrane. Functionally, may play a role in cell differentiation in the intestinal epithelium. This chain is Proteolipid protein 2 (Plp2), found in Mus musculus (Mouse).